Here is a 183-residue protein sequence, read N- to C-terminus: MLLEETLKSCPIVKRGKYHYFIHPISDGVPLVEPKLLREVATRIIKIGNFEGVNKIVTAEAMGIPLVTTLSLYTDIPYVIMRKREYKLPGEVPVFQSTGYSKGQLYLNGIEKGDKVIIIDDVISTGGTMIAIINALERAGAEIKDIICVIERGDGKKIVEEKTGYKIKTLVKIDVVDGEVVIL.

The protein belongs to the purine/pyrimidine phosphoribosyltransferase family. Archaeal HPRT subfamily. In terms of assembly, homodimer.

The protein localises to the cytoplasm. The catalysed reaction is IMP + diphosphate = hypoxanthine + 5-phospho-alpha-D-ribose 1-diphosphate. The enzyme catalyses GMP + diphosphate = guanine + 5-phospho-alpha-D-ribose 1-diphosphate. It participates in purine metabolism; IMP biosynthesis via salvage pathway; IMP from hypoxanthine: step 1/1. Functionally, catalyzes a salvage reaction resulting in the formation of IMP that is energically less costly than de novo synthesis. This is Hypoxanthine/guanine phosphoribosyltransferase from Methanocaldococcus vulcanius (strain ATCC 700851 / DSM 12094 / M7) (Methanococcus vulcanius).